The sequence spans 143 residues: Large ribosomal subunit protein uL15 (143 aa).

The interval 1–52 (MKLNTLAPAAGSKSAPKRLGRGIGSGLGKTSGKGHKGQKARSGGYHKVGFEG) is disordered. Residues 21 to 31 (RGIGSGLGKTS) are compositionally biased toward gly residues.

Belongs to the universal ribosomal protein uL15 family. In terms of assembly, part of the 50S ribosomal subunit.

Binds to the 23S rRNA. The chain is Large ribosomal subunit protein uL15 from Francisella tularensis subsp. tularensis (strain FSC 198).